We begin with the raw amino-acid sequence, 334 residues long: MLNTLIVGASGYAGAELVSYVNRHPHMTITALTVSAQSNDAGKLISDLHPQLKGIVDLPLQPMSDVRDFSADVDVVFLATAHEVSHDLAPQFLQAGCVVFDLSGAFRVNDRAFYEKYYGFTHQYPELLEQAVYGLAEWNVDKLNTANLIAVPGCYPTAAQLSLKPLIDGGLLDLTQWPVINATSGVSGAGRKAAISNSFCEVSLQPYGVFTHRHQPEIAVHLGAEVIFTPHLGNFPRGILETITCRLKAGVTHAQVADVLQKAYGDKPLVRLYDKGVPALKNVVGLPFCDIGFAVQGEHLIVVATEDNLLKGAAAQAVQCANIRFGFAETQSLI.

Cys154 is an active-site residue.

The protein belongs to the NAGSA dehydrogenase family. Type 1 subfamily.

It is found in the cytoplasm. The enzyme catalyses N-acetyl-L-glutamate 5-semialdehyde + phosphate + NADP(+) = N-acetyl-L-glutamyl 5-phosphate + NADPH + H(+). Its pathway is amino-acid biosynthesis; L-arginine biosynthesis; N(2)-acetyl-L-ornithine from L-glutamate: step 3/4. Its function is as follows. Catalyzes the NADPH-dependent reduction of N-acetyl-5-glutamyl phosphate to yield N-acetyl-L-glutamate 5-semialdehyde. The polypeptide is N-acetyl-gamma-glutamyl-phosphate reductase (Salmonella typhimurium (strain LT2 / SGSC1412 / ATCC 700720)).